The following is a 352-amino-acid chain: Thiamine-phosphate synthase (352 aa).

Residues 1-128 (MNPTPSETSL…AAEAAAIRYG (128 aa)) form a unknown region. Positions 63–85 (SYKQARSTSTDTGAGLKHPAQLD) are disordered. Residues 129–352 (LYDLEVTCLN…LLQQLDQATI (224 aa)) are thiamine-phosphate synthase. 4-amino-2-methyl-5-(diphosphooxymethyl)pyrimidine-binding positions include 180–184 (QYRCK) and asparagine 212. Mg(2+)-binding residues include aspartate 213 and aspartate 232. Residues serine 251 and lysine 280 each coordinate 4-amino-2-methyl-5-(diphosphooxymethyl)pyrimidine. Glycine 307 is a binding site for 2-[(2R,5Z)-2-carboxy-4-methylthiazol-5(2H)-ylidene]ethyl phosphate.

Belongs to the thiamine-phosphate synthase family. Mg(2+) serves as cofactor.

It carries out the reaction 2-[(2R,5Z)-2-carboxy-4-methylthiazol-5(2H)-ylidene]ethyl phosphate + 4-amino-2-methyl-5-(diphosphooxymethyl)pyrimidine + 2 H(+) = thiamine phosphate + CO2 + diphosphate. The catalysed reaction is 2-(2-carboxy-4-methylthiazol-5-yl)ethyl phosphate + 4-amino-2-methyl-5-(diphosphooxymethyl)pyrimidine + 2 H(+) = thiamine phosphate + CO2 + diphosphate. The enzyme catalyses 4-methyl-5-(2-phosphooxyethyl)-thiazole + 4-amino-2-methyl-5-(diphosphooxymethyl)pyrimidine + H(+) = thiamine phosphate + diphosphate. Its pathway is cofactor biosynthesis; thiamine diphosphate biosynthesis; thiamine phosphate from 4-amino-2-methyl-5-diphosphomethylpyrimidine and 4-methyl-5-(2-phosphoethyl)-thiazole: step 1/1. Condenses 4-methyl-5-(beta-hydroxyethyl)thiazole monophosphate (THZ-P) and 2-methyl-4-amino-5-hydroxymethyl pyrimidine pyrophosphate (HMP-PP) to form thiamine monophosphate (TMP). This chain is Thiamine-phosphate synthase, found in Synechococcus sp. (strain CC9605).